Here is a 331-residue protein sequence, read N- to C-terminus: Centriolar satellite-associated tubulin polyglutamylase complex regulator 1 (331 aa).

A disordered region spans residues 283-331 (PTSNNNSSSSALGQKEMSKKASPRKSLHQRKRIEMESDGSTEETDSSEN). Residues 303–313 (ASPRKSLHQRK) are compositionally biased toward basic residues. Over residues 318–331 (ESDGSTEETDSSEN) the composition is skewed to acidic residues.

The protein belongs to the CSTPP1 family. In terms of assembly, interacts with PCM1. Interacts with the complex TPGC. Binds to alpha-tubulin. As to expression, expression in elevated in ciliated tissues/organs, including brain, spinal cord, kidney, eyes, ears and lateral line.

It localises to the cytoplasm. Its subcellular location is the cytoskeleton. The protein localises to the microtubule organizing center. It is found in the centrosome. The protein resides in the centriolar satellite. Its function is as follows. Regulator of the tubulin polyglutamylase complex (TPGC) that controls cytoskeletal organization, nuclear shape, and cilium disassembly by balancing microtubule and actin assembly. Regulates the assembly and stability of the TPGC and thereby modulates polyglutamylation of the microtubule, which antagonizes MAP4 binding. The polypeptide is Centriolar satellite-associated tubulin polyglutamylase complex regulator 1 (cstpp1) (Danio rerio (Zebrafish)).